We begin with the raw amino-acid sequence, 335 residues long: Ketol-acid reductoisomerase (NAD(P)(+)) (335 aa).

Residues Ala-5–Thr-185 enclose the KARI N-terminal Rossmann domain. NADP(+) contacts are provided by residues Tyr-28 to Gln-31, Arg-52, Ser-56, and Asp-86 to Gln-89. The active site involves His-111. Gly-137 is a binding site for NADP(+). The region spanning Thr-186–Gly-331 is the KARI C-terminal knotted domain. Asp-194, Glu-198, Glu-230, and Glu-234 together coordinate Mg(2+). Ser-255 contributes to the substrate binding site. The interval Gly-301–Ser-335 is disordered. Basic and acidic residues predominate over residues Gly-308–Ser-335.

This sequence belongs to the ketol-acid reductoisomerase family. Mg(2+) serves as cofactor.

It catalyses the reaction (2R)-2,3-dihydroxy-3-methylbutanoate + NAD(+) = (2S)-2-acetolactate + NADH + H(+). The catalysed reaction is (2R)-2,3-dihydroxy-3-methylbutanoate + NADP(+) = (2S)-2-acetolactate + NADPH + H(+). The protein operates within amino-acid biosynthesis; L-isoleucine biosynthesis; L-isoleucine from 2-oxobutanoate: step 2/4. Its pathway is amino-acid biosynthesis; L-valine biosynthesis; L-valine from pyruvate: step 2/4. Its function is as follows. Involved in the biosynthesis of branched-chain amino acids (BCAA). Catalyzes an alkyl-migration followed by a ketol-acid reduction of (S)-2-acetolactate (S2AL) to yield (R)-2,3-dihydroxy-isovalerate. In the isomerase reaction, S2AL is rearranged via a Mg-dependent methyl migration to produce 3-hydroxy-3-methyl-2-ketobutyrate (HMKB). In the reductase reaction, this 2-ketoacid undergoes a metal-dependent reduction by NADPH or NADH to yield (R)-2,3-dihydroxy-isovalerate. This Metallosphaera sedula (strain ATCC 51363 / DSM 5348 / JCM 9185 / NBRC 15509 / TH2) protein is Ketol-acid reductoisomerase (NAD(P)(+)).